The following is a 563-amino-acid chain: Rab escort protein 1 (563 aa).

The interval 538–563 (ELFKEETSPAENTTEEENDGGVEIED) is disordered. The segment covering 550-563 (TTEEENDGGVEIED) has biased composition (acidic residues).

The protein belongs to the Rab GDI family. Heterotrimer composed of the alpha subunit RGTA, the beta subunit RGTB and REP; within this trimer, RGTA and RGTB form the catalytic component, while REP mediates peptide substrate binding. As to expression, expressed in roots, leaves and flowers.

The protein localises to the cytoplasm. Substrate-binding subunit of the Rab geranylgeranyltransferase (GGTase) complex. Binds unprenylated Rab proteins and presents the substrate peptide to the catalytic component composed of the alpha subunit RGTA and the beta subunit RGTB. Preferentially binds the GDP-bound form of Rab and stimulates geranylgeranylation of various Rab GTPases in vitro. In Arabidopsis thaliana (Mouse-ear cress), this protein is Rab escort protein 1.